The following is an 82-amino-acid chain: Small ribosomal subunit protein bS18 (82 aa).

The protein belongs to the bacterial ribosomal protein bS18 family. In terms of assembly, part of the 30S ribosomal subunit. Forms a tight heterodimer with protein bS6.

Functionally, binds as a heterodimer with protein bS6 to the central domain of the 16S rRNA, where it helps stabilize the platform of the 30S subunit. The protein is Small ribosomal subunit protein bS18 of Bifidobacterium longum (strain NCC 2705).